The sequence spans 518 residues: 2-isopropylmalate synthase (518 aa).

The region spanning 4–266 (INFFDTTLRD…ESTIQLNEIK (263 aa)) is the Pyruvate carboxyltransferase domain. Mn(2+) contacts are provided by aspartate 13, histidine 201, histidine 203, and asparagine 237. Residues 391–518 (DFISLQVHYG…GLSKQAAVGS (128 aa)) form a regulatory domain region.

Belongs to the alpha-IPM synthase/homocitrate synthase family. LeuA type 1 subfamily. As to quaternary structure, homodimer. Mn(2+) serves as cofactor.

The protein localises to the cytoplasm. The enzyme catalyses 3-methyl-2-oxobutanoate + acetyl-CoA + H2O = (2S)-2-isopropylmalate + CoA + H(+). The protein operates within amino-acid biosynthesis; L-leucine biosynthesis; L-leucine from 3-methyl-2-oxobutanoate: step 1/4. In terms of biological role, catalyzes the condensation of the acetyl group of acetyl-CoA with 3-methyl-2-oxobutanoate (2-ketoisovalerate) to form 3-carboxy-3-hydroxy-4-methylpentanoate (2-isopropylmalate). The chain is 2-isopropylmalate synthase from Bacillus licheniformis (strain ATCC 14580 / DSM 13 / JCM 2505 / CCUG 7422 / NBRC 12200 / NCIMB 9375 / NCTC 10341 / NRRL NRS-1264 / Gibson 46).